We begin with the raw amino-acid sequence, 137 residues long: Large ribosomal subunit protein uL16 (137 aa).

Belongs to the universal ribosomal protein uL16 family. Part of the 50S ribosomal subunit.

Its function is as follows. Binds 23S rRNA and is also seen to make contacts with the A and possibly P site tRNAs. In Sorangium cellulosum (strain So ce56) (Polyangium cellulosum (strain So ce56)), this protein is Large ribosomal subunit protein uL16.